Consider the following 806-residue polypeptide: Protein translocase subunit SecA (806 aa).

Residues glutamine 87, 105–109 (GEGKT), and aspartate 493 contribute to the ATP site.

The protein belongs to the SecA family. As to quaternary structure, monomer and homodimer. Part of the essential Sec protein translocation apparatus which comprises SecA, SecYEG and auxiliary proteins SecDF. Other proteins may also be involved.

The protein resides in the cell membrane. It localises to the cytoplasm. It carries out the reaction ATP + H2O + cellular proteinSide 1 = ADP + phosphate + cellular proteinSide 2.. Part of the Sec protein translocase complex. Interacts with the SecYEG preprotein conducting channel. Has a central role in coupling the hydrolysis of ATP to the transfer of proteins into and across the cell membrane, serving as an ATP-driven molecular motor driving the stepwise translocation of polypeptide chains across the membrane. The polypeptide is Protein translocase subunit SecA (Mycoplasma genitalium (strain ATCC 33530 / DSM 19775 / NCTC 10195 / G37) (Mycoplasmoides genitalium)).